The primary structure comprises 593 residues: Dolichyl-phosphooligosaccharide-protein glycotransferase 2 (593 aa).

At 1 to 12 (MTPVGMDRKSLS) the chain is on the cytoplasmic side. The helical transmembrane segment at 13–33 (LLILIVLLGLCIRLQNFGEIF) threads the bilayer. Residues 34 to 98 (DSRIYYYGYD…GLFLGFWASE (65 aa)) lie on the Extracellular side of the membrane. The DXD motif 1 signature appears at 41–43 (GYD). Asp-43 is a binding site for Mn(2+). The helical transmembrane segment at 99 to 119 (IFAVVFPVIIGVLCIVLVYLI) threads the bilayer. Residues 120–128 (SLEVLRNEK) lie on the Cytoplasmic side of the membrane. Residues 129–149 (FALISAFIFSVCPVTVWKSLL) form a helical membrane-spanning segment. Topologically, residues 150–154 (GKADH) are extracellular. Asp-153 serves as a coordination point for Mn(2+). Positions 153–155 (DHH) match the DXD motif 2 motif. His-154 contributes to the a glycophospholipid binding site. Residue His-155 coordinates Mn(2+). The chain crosses the membrane as a helical span at residues 155–175 (HIWVVFLLLLSIWLVTKPGLL). The Cytoplasmic portion of the chain corresponds to 176–180 (KLLSG). Residues 181 to 201 (IPMLLMALSWLGAPIYAALLA) traverse the membrane as a helical segment. Over 202–229 (VSSLFQFNEKEVRIVGISNLIPVLSSIQ) the chain is Extracellular. Residues 230 to 250 (NLFLGFSFLAIAVFLLVGSFV) form a helical membrane-spanning segment. The Cytoplasmic portion of the chain corresponds to 251–265 (KRFERRFRYAIVYYL). A helical transmembrane segment spans residues 266 to 286 (CICSVALLSAYLMPVGWLGFV). The Extracellular portion of the chain corresponds to 287–310 (KSGISYVLGTDIYLPTIREARSFQ). The TIXE motif motif lies at 302–305 (TIRE). The chain crosses the membrane as a helical span at residues 311–331 (ILGVISSAGYLFFVLAIPALF). Met-332 is a topological domain (cytoplasmic). The chain crosses the membrane as a helical span at residues 333–353 (LRNGFLKVFFVLSFLISILQL). A topological domain (extracellular) is located at residue Arg-354. Arg-354 is a binding site for a glycophospholipid. Residues 355 to 375 (FVEVLAFPVAILASYTICQIL) traverse the membrane as a helical segment. The Cytoplasmic portion of the chain corresponds to 376–411 (ERVDYPVFRKEEEGESKRRGRKEKKKAVEIRKKDHA). Residues 412–432 (TVIAFLLFLALPCFANSLAPV) form a helical membrane-spanning segment. Residues 433-593 (EMTMDWKEAL…FGTVKIFEVK (161 aa)) lie on the Extracellular side of the membrane. Positions 468-470 (WWD) are interacts with target acceptor peptide in protein substrate. A WWDYG motif motif is present at residues 468–472 (WWDYG). The DKi motif motif lies at 524–539 (ELTVKPETNKTKFIPI).

It belongs to the STT3 family. Mn(2+) serves as cofactor. Mg(2+) is required as a cofactor. It depends on Zn(2+) as a cofactor.

It is found in the cell membrane. It carries out the reaction an archaeal dolichyl phosphooligosaccharide + [protein]-L-asparagine = an archaeal dolichyl phosphate + a glycoprotein with the oligosaccharide chain attached by N-beta-D-glycosyl linkage to a protein L-asparagine.. It participates in protein modification; protein glycosylation. Functionally, oligosaccharyl transferase (OST) that catalyzes the initial transfer of a defined glycan (a GalNAc-linked heptasaccharide composed of 4 Hex, 3 dHex and a sulfate for A.fulgidus AglB-S) from the lipid carrier dolichol-monophosphate to an asparagine residue within an Asn-X-Ser/Thr consensus motif in nascent polypeptide chains, the first step in protein N-glycosylation. The chain is Dolichyl-phosphooligosaccharide-protein glycotransferase 2 (aglB2) from Archaeoglobus fulgidus (strain ATCC 49558 / DSM 4304 / JCM 9628 / NBRC 100126 / VC-16).